Reading from the N-terminus, the 215-residue chain is MSENSNHHCIIVGIAGASASGKSLIASTIYNELRAKVGDHQIGVITEDSYYKDQSHLTMEERVKTNYDHPNALDHELLCEHLEQLMRGEAVNIPTYSYTEHTRTSEVDVMTPKKVIILEGILLLTDPRLRNLMHASVFMDTPLDICLLRRARRDVEERGRTMESVFEQYQKTVRPMFMQFIDPSKQHADIIVPRGGKNRIAIDVLKAHISRLLKA.

16–23 is a binding site for ATP; sequence GASASGKS.

The protein belongs to the uridine kinase family.

It is found in the cytoplasm. It catalyses the reaction uridine + ATP = UMP + ADP + H(+). The enzyme catalyses cytidine + ATP = CMP + ADP + H(+). Its pathway is pyrimidine metabolism; CTP biosynthesis via salvage pathway; CTP from cytidine: step 1/3. The protein operates within pyrimidine metabolism; UMP biosynthesis via salvage pathway; UMP from uridine: step 1/1. The polypeptide is Uridine kinase (Aliivibrio fischeri (strain ATCC 700601 / ES114) (Vibrio fischeri)).